The primary structure comprises 1627 residues: Pappalysin-1 (1627 aa).

Residues 1–22 (MRLWSWVLHLGLLSAALGCGLA) form the signal peptide. The propeptide occupies 23-81 (ERPRRARRDPRAGRPPRPAAGPATCATRAARGRRASPPPPPPPGGAWEAVRVPRRRQQR). The tract at residues 23 to 99 (ERPRRARRDP…PSPPSRALYF (77 aa)) is disordered. A compositionally biased stretch (low complexity) spans 42–51 (AGPATCATRA). 17 disulfide bridges follow: Cys144–Cys235, Cys327–Cys622, Cys332–Cys657, Cys414–Cys428, Cys424–Cys440, Cys457–Cys473, Cys474–Cys485, Cys583–Cys600, Cys587–Cys612, Cys710–Cys878, Cys713–Cys881, Cys753–Cys835, Cys775–Cys781, Cys947–Cys975, Cys960–Cys971, Cys983–Cys990, and Cys999–Cys1011. Positions 272–583 (METHGAHTAL…FRGISEIQSC (312 aa)) are metalloprotease. 2 N-linked (GlcNAc...) asparagine glycosylation sites follow: Asn390 and Asn402. Asn429 carries an N-linked (GlcNAc...) asparagine glycan. N-linked (GlcNAc...) asparagine glycosylation occurs at Asn480. His562 provides a ligand contact to Zn(2+). Glu563 is an active-site residue. Residues His566 and His572 each contribute to the Zn(2+) site. 3 N-linked (GlcNAc...) asparagine glycosylation sites follow: Asn601, Asn619, and Asn725. The segment at 733–754 (SPSGHWSPREAEGHPDVEQPCK) is disordered. A compositionally biased stretch (basic and acidic residues) spans 739–751 (SPREAEGHPDVEQ). Residue Asn825 is glycosylated (N-linked (GlcNAc...) asparagine). An N-linked (GlcNAc...) asparagine glycan is attached at Asn1026. Disulfide bonds link Cys1036/Cys1070, Cys1051/Cys1139, Cys1192/Cys1205, Cys1215/Cys1269, Cys1227/Cys1238, Cys1242/Cys1280, Cys1285/Cys1329, Cys1300/Cys1310, Cys1314/Cys1342, Cys1346/Cys1399, Cys1362/Cys1373, Cys1377/Cys1410, Cys1415/Cys1458, Cys1428/Cys1438, Cys1442/Cys1471, Cys1478/Cys1539, Cys1492/Cys1502, Cys1506/Cys1554, and Cys1558/Cys1576. Sushi domains are found at residues 1213–1282 (TDCP…ACEP), 1283–1344 (VDCS…LCEL), 1345–1412 (MCLA…ACVP), 1413–1473 (VTCD…VCQE), and 1476–1556 (GQCS…HCVK). Asn1222 and Asn1226 each carry an N-linked (GlcNAc...) asparagine glycan. Asn1323 carries N-linked (GlcNAc...) asparagine glycosylation. An N-linked (GlcNAc...) asparagine glycan is attached at Asn1465. A glycan (N-linked (GlcNAc...) asparagine) is linked at Asn1519.

It belongs to the peptidase M43B family. In terms of assembly, homodimer; disulfide-linked. In pregnancy serum, predominantly found as a disulfide-linked 2:2 heterotetramer with the proform of PRG2. Zn(2+) serves as cofactor. Post-translationally, there appear to be no free sulfhydryl groups. In terms of tissue distribution, high levels in placenta and pregnancy serum. In placenta, expressed in X cells in septa and anchoring villi, and in syncytiotrophoblasts in the chorionic villi. Lower levels are found in a variety of other tissues including kidney, myometrium, endometrium, ovaries, breast, prostate, bone marrow, colon, fibroblasts and osteoblasts.

It localises to the secreted. It catalyses the reaction Cleavage of the 135-Met-|-Lys-136 bond in insulin-like growth factor binding protein (IGFBP)-4, and the 143-Ser-|-Lys-144 bond in IGFBP-5.. Inhibited by complexation with the proform of PRG2. Functionally, metalloproteinase which specifically cleaves IGFBP-4 and IGFBP-5, resulting in release of bound IGF. Cleavage of IGFBP-4 is dramatically enhanced by the presence of IGF, whereas cleavage of IGFBP-5 is slightly inhibited by the presence of IGF. The sequence is that of Pappalysin-1 (PAPPA) from Homo sapiens (Human).